Reading from the N-terminus, the 239-residue chain is UPF0173 metal-dependent hydrolase DVU_3308 (239 aa).

Belongs to the UPF0173 family.

The chain is UPF0173 metal-dependent hydrolase DVU_3308 from Nitratidesulfovibrio vulgaris (strain ATCC 29579 / DSM 644 / CCUG 34227 / NCIMB 8303 / VKM B-1760 / Hildenborough) (Desulfovibrio vulgaris).